A 136-amino-acid polypeptide reads, in one-letter code: Large ribosomal subunit protein uL16 (136 aa).

Positions 1 to 17 are enriched in basic residues; that stretch reads MLQPKRTKFRKRHKGRN. Residues 1 to 21 form a disordered region; sequence MLQPKRTKFRKRHKGRNRGLA.

It belongs to the universal ribosomal protein uL16 family. As to quaternary structure, part of the 50S ribosomal subunit.

In terms of biological role, binds 23S rRNA and is also seen to make contacts with the A and possibly P site tRNAs. The polypeptide is Large ribosomal subunit protein uL16 (Buchnera aphidicola subsp. Acyrthosiphon kondoi (Acyrthosiphon kondoi symbiotic bacterium)).